Here is a 597-residue protein sequence, read N- to C-terminus: Elongation factor 4 (597 aa).

The 183-residue stretch at 2 to 184 (DHIRNFSIIA…SLIAKVPPPK (183 aa)) folds into the tr-type G domain. GTP is bound by residues 14-19 (DHGKST) and 131-134 (NKID).

Belongs to the TRAFAC class translation factor GTPase superfamily. Classic translation factor GTPase family. LepA subfamily.

It localises to the cell inner membrane. It catalyses the reaction GTP + H2O = GDP + phosphate + H(+). Required for accurate and efficient protein synthesis under certain stress conditions. May act as a fidelity factor of the translation reaction, by catalyzing a one-codon backward translocation of tRNAs on improperly translocated ribosomes. Back-translocation proceeds from a post-translocation (POST) complex to a pre-translocation (PRE) complex, thus giving elongation factor G a second chance to translocate the tRNAs correctly. Binds to ribosomes in a GTP-dependent manner. This is Elongation factor 4 from Burkholderia pseudomallei (strain 1710b).